Here is a 334-residue protein sequence, read N- to C-terminus: UDP-N-acetylglucosamine--N-acetylmuramyl-(pentapeptide) pyrophosphoryl-undecaprenol N-acetylglucosamine transferase (334 aa).

Residues 11–13 (TGG), asparagine 125, serine 185, isoleucine 229, and glutamine 274 contribute to the UDP-N-acetyl-alpha-D-glucosamine site.

This sequence belongs to the glycosyltransferase 28 family. MurG subfamily.

It is found in the cell inner membrane. It carries out the reaction di-trans,octa-cis-undecaprenyl diphospho-N-acetyl-alpha-D-muramoyl-L-alanyl-D-glutamyl-meso-2,6-diaminopimeloyl-D-alanyl-D-alanine + UDP-N-acetyl-alpha-D-glucosamine = di-trans,octa-cis-undecaprenyl diphospho-[N-acetyl-alpha-D-glucosaminyl-(1-&gt;4)]-N-acetyl-alpha-D-muramoyl-L-alanyl-D-glutamyl-meso-2,6-diaminopimeloyl-D-alanyl-D-alanine + UDP + H(+). The protein operates within cell wall biogenesis; peptidoglycan biosynthesis. Cell wall formation. Catalyzes the transfer of a GlcNAc subunit on undecaprenyl-pyrophosphoryl-MurNAc-pentapeptide (lipid intermediate I) to form undecaprenyl-pyrophosphoryl-MurNAc-(pentapeptide)GlcNAc (lipid intermediate II). In Thermosipho melanesiensis (strain DSM 12029 / CIP 104789 / BI429), this protein is UDP-N-acetylglucosamine--N-acetylmuramyl-(pentapeptide) pyrophosphoryl-undecaprenol N-acetylglucosamine transferase.